Reading from the N-terminus, the 454-residue chain is Putative F-box/LRR-repeat protein At3g58880 (454 aa).

In terms of domain architecture, F-box spans 2 to 48; it reads VDLVSSLPDDLLGHILSLLTTKEAALTSILSKRWRYLIAFVPYLEFD. LRR repeat units follow at residues 77 to 102, 144 to 168, 169 to 194, 214 to 240, 270 to 301, 303 to 327, and 328 to 353; these read LALH…DLLN, SGCR…TLDS, VSWS…NLAN, IKSV…NYTA, LVSV…YLSP, TLQV…VIES, and SMDI…VIKG.

The sequence is that of Putative F-box/LRR-repeat protein At3g58880 from Arabidopsis thaliana (Mouse-ear cress).